The following is a 323-amino-acid chain: tRNA U34 carboxymethyltransferase (323 aa).

Residues K91, W105, K110, G130, 152 to 154, 181 to 182, M196, Y200, and R315 each bind carboxy-S-adenosyl-L-methionine; these read DPT and IE.

It belongs to the class I-like SAM-binding methyltransferase superfamily. CmoB family. Homotetramer.

The enzyme catalyses carboxy-S-adenosyl-L-methionine + 5-hydroxyuridine(34) in tRNA = 5-carboxymethoxyuridine(34) in tRNA + S-adenosyl-L-homocysteine + H(+). Its function is as follows. Catalyzes carboxymethyl transfer from carboxy-S-adenosyl-L-methionine (Cx-SAM) to 5-hydroxyuridine (ho5U) to form 5-carboxymethoxyuridine (cmo5U) at position 34 in tRNAs. This Salmonella paratyphi B (strain ATCC BAA-1250 / SPB7) protein is tRNA U34 carboxymethyltransferase.